Reading from the N-terminus, the 93-residue chain is Phosphoribosyl-ATP pyrophosphatase (93 aa).

Belongs to the PRA-PH family.

It localises to the cytoplasm. The catalysed reaction is 1-(5-phospho-beta-D-ribosyl)-ATP + H2O = 1-(5-phospho-beta-D-ribosyl)-5'-AMP + diphosphate + H(+). It functions in the pathway amino-acid biosynthesis; L-histidine biosynthesis; L-histidine from 5-phospho-alpha-D-ribose 1-diphosphate: step 2/9. This chain is Phosphoribosyl-ATP pyrophosphatase, found in Mycolicibacterium smegmatis (strain ATCC 700084 / mc(2)155) (Mycobacterium smegmatis).